We begin with the raw amino-acid sequence, 169 residues long: Succinate dehydrogenase cytochrome b560 subunit, mitochondrial (169 aa).

The transit peptide at 1–29 directs the protein to the mitochondrion; sequence MAAFLLRHVSRHCLRAHLNAQLCIRNAAP. Residues 30 to 62 lie on the Mitochondrial matrix side of the membrane; that stretch reads LGTTAKEEMERFWKKNTSSNRPLSPHLTIYKWS. Residues 63–92 traverse the membrane as a helical segment; the sequence is LPMALSVCHRGSGIALSGGVSLFGLSALLL. Topologically, residues 93-112 are mitochondrial intermembrane; it reads PGNFESYLMFVKSLCLGPTL. Residues 113 to 137 traverse the membrane as a helical segment; the sequence is IYSAKFVLVFPLMYHSLNGIRHLLW. A heme b-binding site is contributed by histidine 127. Residues 138–144 are Mitochondrial matrix-facing; it reads DLGKGLA. A helical transmembrane segment spans residues 145-166; the sequence is IPQVWLSGVAVVVLAVLSSGGL. At 167-169 the chain is on the mitochondrial intermembrane side; it reads AAL.

The protein belongs to the cytochrome b560 family. In terms of assembly, component of complex II composed of four subunits: the flavoprotein (FP) SDHA, iron-sulfur protein (IP) SDHB, and a cytochrome b560 composed of SDHC and SDHD. Heme b is required as a cofactor.

It is found in the mitochondrion inner membrane. Its pathway is carbohydrate metabolism; tricarboxylic acid cycle. Its function is as follows. Membrane-anchoring subunit of succinate dehydrogenase (SDH) that is involved in complex II of the mitochondrial electron transport chain and is responsible for transferring electrons from succinate to ubiquinone (coenzyme Q). SDH also oxidizes malate to the non-canonical enol form of oxaloacetate, enol-oxaloacetate. Enol-oxaloacetate, which is a potent inhibitor of the succinate dehydrogenase activity, is further isomerized into keto-oxaloacetate. In Mus musculus (Mouse), this protein is Succinate dehydrogenase cytochrome b560 subunit, mitochondrial (Sdhc).